The primary structure comprises 427 residues: Histidinol dehydrogenase (427 aa).

NAD(+)-binding residues include tyrosine 125, glutamine 186, and asparagine 209. 3 residues coordinate substrate: serine 234, glutamine 256, and histidine 259. Zn(2+)-binding residues include glutamine 256 and histidine 259. Active-site proton acceptor residues include glutamate 325 and histidine 326. Substrate contacts are provided by histidine 326, aspartate 359, glutamate 413, and histidine 419. Residue aspartate 359 coordinates Zn(2+). Position 419 (histidine 419) interacts with Zn(2+).

It belongs to the histidinol dehydrogenase family. Zn(2+) is required as a cofactor.

The catalysed reaction is L-histidinol + 2 NAD(+) + H2O = L-histidine + 2 NADH + 3 H(+). The protein operates within amino-acid biosynthesis; L-histidine biosynthesis; L-histidine from 5-phospho-alpha-D-ribose 1-diphosphate: step 9/9. Functionally, catalyzes the sequential NAD-dependent oxidations of L-histidinol to L-histidinaldehyde and then to L-histidine. The chain is Histidinol dehydrogenase from Leptospira interrogans serogroup Icterohaemorrhagiae serovar Lai (strain 56601).